The following is a 301-amino-acid chain: Protein ARMCX6 (301 aa).

The mitochondrion outer membrane (MOM)-targeting sequence stretch occupies residues Met1–Glu6. The Mitochondrial intermembrane portion of the chain corresponds to Met1–Met7. A helical; Signal-anchor membrane pass occupies residues Gly8 to Tyr25. A mitochondrion outer membrane (MOM)-targeting sequence region spans residues Lys26–Glu36. Over Lys26 to Pro301 the chain is Cytoplasmic. A disordered region spans residues Trp69–Lys101.

Belongs to the eutherian X-chromosome-specific Armcx family. As to expression, highly expressed in the developing neural tissues, neural crest derivatives and hind limbs. Also widely expressed in the adult nervous tissue, especially in the forebrain, including the cerebral cortex, hippocampus and thalamus.

Its subcellular location is the mitochondrion. It localises to the mitochondrion outer membrane. Functionally, may regulate the dynamics and distribution of mitochondria in neural cells. This is Protein ARMCX6 (Armcx6) from Mus musculus (Mouse).